Reading from the N-terminus, the 247-residue chain is Carboxy-S-adenosyl-L-methionine synthase (247 aa).

Residues tyrosine 40, 65-67 (GAS), 90-91 (DN), 122-123 (DI), asparagine 137, and arginine 204 contribute to the S-adenosyl-L-methionine site.

The protein belongs to the class I-like SAM-binding methyltransferase superfamily. Cx-SAM synthase family. Homodimer.

The catalysed reaction is prephenate + S-adenosyl-L-methionine = carboxy-S-adenosyl-L-methionine + 3-phenylpyruvate + H2O. Functionally, catalyzes the conversion of S-adenosyl-L-methionine (SAM) to carboxy-S-adenosyl-L-methionine (Cx-SAM). The protein is Carboxy-S-adenosyl-L-methionine synthase of Pseudomonas putida (strain ATCC 47054 / DSM 6125 / CFBP 8728 / NCIMB 11950 / KT2440).